The primary structure comprises 425 residues: Arogenate dehydratase 5, chloroplastic (425 aa).

The N-terminal 38 residues, 1 to 38 (MQTISPAFSCDLKSVIQPNLTAKKARYSHVNGKRVSVR), are a transit peptide targeting the chloroplast. One can recognise a Prephenate dehydratase domain in the interval 127–304 (RVAYQGVPGA…NVTRFLMLAR (178 aa)). The ACT domain occupies 320–411 (VFAAQEHKGT…SFLRVLGSYP (92 aa)).

In terms of tissue distribution, expressed in roots, leaves, stems, flowers and siliques. More abundant in stems and roots.

The protein localises to the plastid. It is found in the chloroplast stroma. The catalysed reaction is L-arogenate + H(+) = L-phenylalanine + CO2 + H2O. It functions in the pathway amino-acid biosynthesis; L-phenylalanine biosynthesis; L-phenylalanine from L-arogenate: step 1/1. Functionally, converts the prephenate produced from the shikimate-chorismate pathway into phenylalanine. The chain is Arogenate dehydratase 5, chloroplastic from Arabidopsis thaliana (Mouse-ear cress).